A 314-amino-acid polypeptide reads, in one-letter code: Periplasmic [NiFe] hydrogenase small subunit (314 aa).

The segment at residues 1-49 (MNFSVGLGRDDAEKRLVQNGVSRRDFMKFCATVAAAMGMGPAFAPKVAE) is a signal peptide (tat-type signal). Cys67, Cys70, Cys164, Cys197, His234, Cys237, Cys262, and Cys268 together coordinate [4Fe-4S] cluster. Residues Cys277, Cys295, and Cys298 each coordinate [3Fe-4S] cluster.

The protein belongs to the [NiFe]/[NiFeSe] hydrogenase small subunit family. Heterodimer of a large and a small subunit. Requires [4Fe-4S] cluster as cofactor. The cofactor is [3Fe-4S] cluster. Predicted to be exported by the Tat system. The position of the signal peptide cleavage has been experimentally proven.

The protein localises to the periplasm. The catalysed reaction is 2 Fe(III)-[cytochrome c3] + H2 = 2 Fe(II)-[cytochrome c3] + 2 H(+). Its function is as follows. Involved in hydrogen uptake for the anaerobic reduction of sulfate to hydrogen sulfide in an electron transport chain. Cytochrome c3 is the physiological electron acceptor. The protein is Periplasmic [NiFe] hydrogenase small subunit (hydA) of Solidesulfovibrio fructosivorans (Desulfovibrio fructosivorans).